The sequence spans 538 residues: MAVISKKIPAPDKVEIKTALISVFDKTGIVDLARALSARGVRLLSTGGTFKAITAAGLAVTDVSEITGFPEIMDGRVKTLHPTVHGGLLAIRDDSEHQDAMKQHGIEGIDLAVINLYPFEEVRAAGGDYPTTVENIDIGGPAMIRASAKNHAYVTTLTDPADYAELLEQLSADDGKTAYTFRQRMAAKAYARTAAYDAMISNWFAETLSIDTPRHRVIGGALKEEMRYGENPHQKAAFYVTGEKRPGVSTAALLQGKQLSYNNINDTDAAYELVAEFLPEKAPACAIIKHANPCGVATGSSLVEAYRRALACDSVSAFGGIIALNQTLDAETAEEIVKLFTEVIIAPDVTEEAKAIVARKPNLRLLSAGGLPDPRAVGLTAKTVSGGLLVQSRDNGMVEDLELKVVTRRAPTAQELDDMKFAFKVGKHVKSNAVVYAKDGQTAGIGAGQMSRVDSARIAALKAEEAAKALGLAVPMTHGSAVASEAFLPFADGLLSMIAAGATAVIQPGGSMRDQEVIDAANEHGVAMVFTGMRHFRH.

Positions 8-158 (IPAPDKVEIK…KNHAYVTTLT (151 aa)) constitute an MGS-like domain.

Belongs to the PurH family.

The enzyme catalyses (6R)-10-formyltetrahydrofolate + 5-amino-1-(5-phospho-beta-D-ribosyl)imidazole-4-carboxamide = 5-formamido-1-(5-phospho-D-ribosyl)imidazole-4-carboxamide + (6S)-5,6,7,8-tetrahydrofolate. The catalysed reaction is IMP + H2O = 5-formamido-1-(5-phospho-D-ribosyl)imidazole-4-carboxamide. It functions in the pathway purine metabolism; IMP biosynthesis via de novo pathway; 5-formamido-1-(5-phospho-D-ribosyl)imidazole-4-carboxamide from 5-amino-1-(5-phospho-D-ribosyl)imidazole-4-carboxamide (10-formyl THF route): step 1/1. It participates in purine metabolism; IMP biosynthesis via de novo pathway; IMP from 5-formamido-1-(5-phospho-D-ribosyl)imidazole-4-carboxamide: step 1/1. The protein is Bifunctional purine biosynthesis protein PurH of Rhizobium johnstonii (strain DSM 114642 / LMG 32736 / 3841) (Rhizobium leguminosarum bv. viciae).